We begin with the raw amino-acid sequence, 643 residues long: MSRPSTPLLDKAPTPDRLRALPEQDLPQLAEELRTELIDAVSTTGGHLGAGLGVVELTVALHHVFNTPYDRIIWDVGHQAYPHKILTGRRDRIRTLRQAGGLSGFTKRAESEYDPFGAAHSSTSISAGLGMAVASELSGEKRNVIAVIGDGSMSAGMAYEAMNNAGALDARLIVILNDNDMSIAPPTGAMSAYLARLVSGRTYRSVREAAKQVAQKLPKFLQDKARKSEEYARAFFTGGTLFEELGFYYVGPIDGHNLDHLLPVLKNVRDTQKGPVLIHVVTQKGKGYAPAEAAADKYHGVNKFDVITGKQAKPPANAPSYTKIFGTSLIEEARHDDKIVAVTAAMPTGTGLDLFGEAFPKRVFDVGIAEQHAVTFAAGLASEGYKPFCAIYSTFLQRGYDQVVHDVSIQNLPVRFPIDRAGLVGADGPTHAGSFDTGFLAALPGFVVMAASDEAELRHMVRTAAEYDEGPISFRYPRGDGVGVDLPERGSVLEIGKGRIVREGTKVALLSFGTRLQECLAAAEELGAAGLSTTVADARFAKPLDHDLIRRLVREHEVLVMVEEGAVGGFSSHVLQFLATDGLLDRGLKVRALMLPDIYQDHGKPDAMYAEAGLDRTGIVRTVFAALHRDELGHEALPTPFRA.

Thiamine diphosphate is bound by residues His-78 and 119–121 (AHS). A Mg(2+)-binding site is contributed by Asp-150. Residues 151-152 (GS), Asn-179, Tyr-288, and Glu-370 contribute to the thiamine diphosphate site. Asn-179 serves as a coordination point for Mg(2+).

This sequence belongs to the transketolase family. DXPS subfamily. Homodimer. The cofactor is Mg(2+). Thiamine diphosphate serves as cofactor.

The catalysed reaction is D-glyceraldehyde 3-phosphate + pyruvate + H(+) = 1-deoxy-D-xylulose 5-phosphate + CO2. The protein operates within metabolic intermediate biosynthesis; 1-deoxy-D-xylulose 5-phosphate biosynthesis; 1-deoxy-D-xylulose 5-phosphate from D-glyceraldehyde 3-phosphate and pyruvate: step 1/1. In terms of biological role, catalyzes the acyloin condensation reaction between C atoms 2 and 3 of pyruvate and glyceraldehyde 3-phosphate to yield 1-deoxy-D-xylulose-5-phosphate (DXP). This Brucella abortus (strain 2308) protein is 1-deoxy-D-xylulose-5-phosphate synthase.